The primary structure comprises 517 residues: Serine carboxypeptidase ctsa-3.2 (517 aa).

The first 21 residues, 1–21, serve as a signal peptide directing secretion; that stretch reads MWWTSLVFSVLLFDLIFISNC. S172 is a catalytic residue. A glycan (N-linked (GlcNAc...) asparagine) is linked at N269. Residues D418 and H485 contribute to the active site.

The protein belongs to the peptidase S10 family.

This is Serine carboxypeptidase ctsa-3.2 from Caenorhabditis elegans.